The chain runs to 476 residues: Probable coniferyl aldehyde dehydrogenase (476 aa).

Active-site residues include glutamate 225 and cysteine 259.

The protein belongs to the aldehyde dehydrogenase family. Homodimer.

The catalysed reaction is (E)-coniferaldehyde + NADP(+) + H2O = (E)-ferulate + NADPH + 2 H(+). It carries out the reaction (E)-coniferaldehyde + NAD(+) + H2O = (E)-ferulate + NADH + 2 H(+). The chain is Probable coniferyl aldehyde dehydrogenase (calB) from Pseudomonas aeruginosa (strain ATCC 15692 / DSM 22644 / CIP 104116 / JCM 14847 / LMG 12228 / 1C / PRS 101 / PAO1).